Consider the following 231-residue polypeptide: Ribonuclease 3 (231 aa).

One can recognise an RNase III domain in the interval 5 to 134 (QEKLKNDYGL…FLGALFIDQG (130 aa)). Glu47 provides a ligand contact to Mg(2+). The active site involves Asp51. Mg(2+) is bound by residues Asn120 and Glu123. Glu123 is a catalytic residue. The DRBM domain maps to 160–229 (DYKTELQEVL…AENAIKGQNH (70 aa)).

Belongs to the ribonuclease III family. Homodimer. The cofactor is Mg(2+).

It localises to the cytoplasm. The enzyme catalyses Endonucleolytic cleavage to 5'-phosphomonoester.. Digests double-stranded RNA. Involved in the processing of primary rRNA transcript to yield the immediate precursors to the large and small rRNAs (23S and 16S). Processes some mRNAs, and tRNAs when they are encoded in the rRNA operon. Processes pre-crRNA and tracrRNA of type II CRISPR loci if present in the organism. In Lactococcus lactis subsp. cremoris (strain SK11), this protein is Ribonuclease 3.